The primary structure comprises 301 residues: Sulfate adenylyltransferase subunit 2 (301 aa).

The protein belongs to the PAPS reductase family. CysD subfamily. In terms of assembly, heterodimer composed of CysD, the smaller subunit, and CysN.

It catalyses the reaction sulfate + ATP + H(+) = adenosine 5'-phosphosulfate + diphosphate. Its pathway is sulfur metabolism; hydrogen sulfide biosynthesis; sulfite from sulfate: step 1/3. Functionally, with CysN forms the ATP sulfurylase (ATPS) that catalyzes the adenylation of sulfate producing adenosine 5'-phosphosulfate (APS) and diphosphate, the first enzymatic step in sulfur assimilation pathway. APS synthesis involves the formation of a high-energy phosphoric-sulfuric acid anhydride bond driven by GTP hydrolysis by CysN coupled to ATP hydrolysis by CysD. This is Sulfate adenylyltransferase subunit 2 from Geotalea daltonii (strain DSM 22248 / JCM 15807 / FRC-32) (Geobacter daltonii).